A 151-amino-acid chain; its full sequence is D-aminoacyl-tRNA deacylase (151 aa).

The Gly-cisPro motif, important for rejection of L-amino acids signature appears at 142 to 143 (GP).

This sequence belongs to the DTD family. In terms of assembly, homodimer.

Its subcellular location is the cytoplasm. The catalysed reaction is glycyl-tRNA(Ala) + H2O = tRNA(Ala) + glycine + H(+). The enzyme catalyses a D-aminoacyl-tRNA + H2O = a tRNA + a D-alpha-amino acid + H(+). In terms of biological role, an aminoacyl-tRNA editing enzyme that deacylates mischarged D-aminoacyl-tRNAs. Also deacylates mischarged glycyl-tRNA(Ala), protecting cells against glycine mischarging by AlaRS. Acts via tRNA-based rather than protein-based catalysis; rejects L-amino acids rather than detecting D-amino acids in the active site. By recycling D-aminoacyl-tRNA to D-amino acids and free tRNA molecules, this enzyme counteracts the toxicity associated with the formation of D-aminoacyl-tRNA entities in vivo and helps enforce protein L-homochirality. The chain is D-aminoacyl-tRNA deacylase from Psychrobacter arcticus (strain DSM 17307 / VKM B-2377 / 273-4).